The following is a 294-amino-acid chain: Ethanolamine ammonia-lyase small subunit (294 aa).

Residues valine 207 and glutamate 228 each contribute to the adenosylcob(III)alamin site.

The protein belongs to the EutC family. The basic unit is a heterodimer which dimerizes to form tetramers. The heterotetramers trimerize; 6 large subunits form a core ring with 6 small subunits projecting outwards. Requires adenosylcob(III)alamin as cofactor.

It localises to the bacterial microcompartment. The catalysed reaction is ethanolamine = acetaldehyde + NH4(+). Its pathway is amine and polyamine degradation; ethanolamine degradation. Functionally, catalyzes the deamination of various vicinal amino-alcohols to oxo compounds. Allows this organism to utilize ethanolamine as the sole source of nitrogen and carbon in the presence of external vitamin B12. The chain is Ethanolamine ammonia-lyase small subunit from Clostridium tetani (strain Massachusetts / E88).